The primary structure comprises 457 residues: Serine/threonine-protein phosphatase 2A regulatory subunit B'' subunit gamma (457 aa).

2 EF-hand domains span residues Pro-276 to Ser-311 and Lys-344 to Gln-379. Ca(2+) is bound by residues Asp-289, Asp-291, Asn-293, Met-295, and Glu-300.

The protein resides in the nucleus. The protein localises to the cytoplasm. Functionally, possible role in the regulation of cell death. The protein is Serine/threonine-protein phosphatase 2A regulatory subunit B'' subunit gamma (ppp2r3c) of Danio rerio (Zebrafish).